The primary structure comprises 296 residues: MIGSFLTRGLVMVLGYAYPAYECYKTVEKNRPEIEQLRFWCQYWILVACLTVFERVGDAFVSWVPMYSEAKLAFFIYLWYPKTRGTTYVYESFFRPYLSQHENDIDHSLLELRTRAGDMAVIYWQRVASYGQTRILEILQYVAAQSTPRPQPPQKRGGRANQAPAKPKKAPVPQSEPEEVSLSSSSSSSSSENEGNEPTRKVSGPSRPRPTVTSVPAADPKNAGTTQIAQKSVASPIVNPPQSTTQVEPMQIEEVEGEAESGNENPNPEGPKETVMEETIRMTRGRLRKTRSEESR.

The interval 146–296 (STPRPQPPQK…LRKTRSEESR (151 aa)) is disordered. Residues 180–193 (VSLSSSSSSSSSEN) show a composition bias toward low complexity. Positions 223–233 (AGTTQIAQKSV) are enriched in polar residues. The segment covering 251 to 261 (QIEEVEGEAES) has biased composition (acidic residues). Basic and acidic residues predominate over residues 270–281 (GPKETVMEETIR).

This sequence belongs to the DP1 family.

The polypeptide is HVA22-like protein i (HVA22I) (Arabidopsis thaliana (Mouse-ear cress)).